Consider the following 238-residue polypeptide: Probable transcriptional regulatory protein STER_0242 (238 aa).

This sequence belongs to the TACO1 family. YeeN subfamily.

The protein localises to the cytoplasm. In Streptococcus thermophilus (strain ATCC BAA-491 / LMD-9), this protein is Probable transcriptional regulatory protein STER_0242.